The chain runs to 282 residues: Protein DOG1-like 3 (282 aa).

Residues 11–254 (EQLQKGCYYE…HEWGRVREEQ (244 aa)) enclose the DOG1 domain.

This Arabidopsis thaliana (Mouse-ear cress) protein is Protein DOG1-like 3.